The primary structure comprises 843 residues: uncharacterized protein (843 aa).

Positions 15-42 form a DNA-binding region, zn(2)-C6 fungal-type; that stretch reads CLRCKQRKIKCDKLWPTCSKCKASSSIC.

The protein localises to the nucleus. Functionally, required for growth on non-fermentable carbon sources. This is an uncharacterized protein from Saccharomyces cerevisiae (strain ATCC 204508 / S288c) (Baker's yeast).